A 171-amino-acid polypeptide reads, in one-letter code: AAF/I fimbrial subunit (171 aa).

An N-terminal signal peptide occupies residues 1-28 (MKTLKNMRRKNLCITLGLVSLLSRGANA).

Its subcellular location is the fimbrium. This chain is AAF/I fimbrial subunit (aggA), found in Escherichia coli.